The chain runs to 90 residues: MANIASAQKRIRQTLVRTARNKARRSRVHSFIRKVEEAIATGNHIEARTAFIAAQPELQRAVTKGVLKANTASRKLSRLSARVKALSASA.

It belongs to the bacterial ribosomal protein bS20 family.

Its function is as follows. Binds directly to 16S ribosomal RNA. The protein is Small ribosomal subunit protein bS20 of Acidiphilium cryptum (strain JF-5).